We begin with the raw amino-acid sequence, 115 residues long: MSLDPAIAARLKRNEAGLVAAVAQERATGDVLMMAWMDDEALARTLATRKATYYSRSRQQYWVKGETSGHTQYVHEVRLDCDGDTVLLIVDQEGAACHTGTHTCWDGDVLLAEPA.

Mg(2+) is bound at residue aspartate 80. Cysteine 81 contributes to the Zn(2+) binding site. Mg(2+)-binding residues include aspartate 82 and aspartate 84. Residues cysteine 97 and cysteine 104 each coordinate Zn(2+).

This sequence belongs to the PRA-CH family. Homodimer. The cofactor is Mg(2+). It depends on Zn(2+) as a cofactor.

The protein resides in the cytoplasm. The enzyme catalyses 1-(5-phospho-beta-D-ribosyl)-5'-AMP + H2O = 1-(5-phospho-beta-D-ribosyl)-5-[(5-phospho-beta-D-ribosylamino)methylideneamino]imidazole-4-carboxamide. It participates in amino-acid biosynthesis; L-histidine biosynthesis; L-histidine from 5-phospho-alpha-D-ribose 1-diphosphate: step 3/9. Its function is as follows. Catalyzes the hydrolysis of the adenine ring of phosphoribosyl-AMP. This chain is Phosphoribosyl-AMP cyclohydrolase, found in Nocardia farcinica (strain IFM 10152).